Here is a 237-residue protein sequence, read N- to C-terminus: Ribosomal RNA small subunit methyltransferase G (237 aa).

Residues Gly-76, Phe-81, 128–129 (VE), and Arg-147 each bind S-adenosyl-L-methionine.

It belongs to the methyltransferase superfamily. RNA methyltransferase RsmG family.

Its subcellular location is the cytoplasm. Its function is as follows. Specifically methylates the N7 position of a guanine in 16S rRNA. This Prochlorococcus marinus (strain AS9601) protein is Ribosomal RNA small subunit methyltransferase G.